Here is a 587-residue protein sequence, read N- to C-terminus: Branchpoint-bridging protein (587 aa).

Positions 1–16 are enriched in polar residues; that stretch reads MLNSRSVGSTGSNNTP. Disordered regions lie at residues 1–64 and 121–142; these read MLNS…DGRG and GDVV…DNHG. Residues 44-64 show a composition bias toward basic and acidic residues; sequence DSYKSNSRMDHRPDGYHDGRG. 2 positions are modified to phosphoserine: Ser131 and Ser133. A KH domain is found at 191 to 271; sequence YVPVKDYPEI…DKINHAIKLI (81 aa). 2 CCHC-type zinc fingers span residues 309–326 and 334–351; these read QVCQ…DCPE and IVCR…DCPV. 2 disordered regions span residues 375–490 and 551–587; these read GGGS…PGTS and IPGA…YSNR. The span at 379-399 shows a compositional bias: polar residues; that stretch reads AISNGNGEPQKSIEFSESGAA. The span at 410–454 shows a compositional bias: low complexity; the sequence is AAASTSVSSSTSSPAPWAKPASSAAPSNPAPWQQPAAPQSAPALS. Polar residues-rich tracts occupy residues 465–483 and 563–573; these read QPTQ…SQNA and SYNTSESSNLN.

This sequence belongs to the BBP/SF1 family. As to quaternary structure, U2AF large subunit (u2af59), U2AF small subunit (u2af23) and bpb1 interact to form a complex required for complex A formation.

The protein resides in the cytoplasm. Its subcellular location is the nucleus. Its function is as follows. Necessary for the splicing of pre-mRNA. The BPB1(SF1)-u2af59-u2af23 complex has a role in the recognition of the branch site (5'-UACUAAC-3'), the pyrimidine tract and the 3'-splice site at the 3'-end of introns. The sequence is that of Branchpoint-bridging protein (bpb1) from Schizosaccharomyces pombe (strain 972 / ATCC 24843) (Fission yeast).